We begin with the raw amino-acid sequence, 389 residues long: Chalcone synthase 5 (389 aa).

Residue cysteine 164 is part of the active site.

This sequence belongs to the thiolase-like superfamily. Chalcone/stilbene synthases family.

It catalyses the reaction (E)-4-coumaroyl-CoA + 3 malonyl-CoA + 3 H(+) = 2',4,4',6'-tetrahydroxychalcone + 3 CO2 + 4 CoA. It functions in the pathway secondary metabolite biosynthesis; flavonoid biosynthesis. Functionally, the primary product of this enzyme is 4,2',4',6'-tetrahydroxychalcone (also termed naringenin-chalcone or chalcone) which can under specific conditions spontaneously isomerize into naringenin. The chain is Chalcone synthase 5 (CHS5) from Trifolium subterraneum (Subterranean clover).